Here is a 47-residue protein sequence, read N- to C-terminus: DQPVERHAENKRHLIPAVMRAMTMNADRRVQCCRIEFCDEDCGCCYH.

Positions 1 to 31 (DQPVERHAENKRHLIPAVMRAMTMNADRRVQ) are excised as a propeptide. 3 disulfide bridges follow: Cys-32–Cys-44, Cys-33–Cys-42, and Cys-38–Cys-45. Residues 46-47 (YH) constitute a propeptide that is removed on maturation.

The protein belongs to the conotoxin M superfamily. As to expression, expressed by the venom duct.

It is found in the secreted. The protein is Conotoxin reg3.11 of Conus regius (Crown cone).